Reading from the N-terminus, the 135-residue chain is Actin-related protein 2/3 complex subunit 5B (135 aa).

It belongs to the ARPC5 family. Component of the Arp2/3 complex composed of ARP2, ARP3, ARPC1/p41-ARC, ARPC2/p34-ARC, ARPC3/p21-ARC, ARPC4/p20-ARC and ARPC5/p16-ARC.

It is found in the cytoplasm. Its subcellular location is the cytoskeleton. It localises to the cell projection. Functions as a component of the Arp2/3 complex which is involved in regulation of actin polymerization and together with an activating nucleation-promoting factor (NPF) mediates the formation of branched actin networks. Arp2/3 complex plays a critical role in the control of cell morphogenesis via the modulation of cell polarity development. This is Actin-related protein 2/3 complex subunit 5B (ARPC5B) from Arabidopsis thaliana (Mouse-ear cress).